Reading from the N-terminus, the 327-residue chain is Zinc transport protein ZntB (327 aa).

The Cytoplasmic segment spans residues 1–273 (MEAIKGSDVN…ARRTYTMSLM (273 aa)). Residues 274-294 (AMVFLPSTFLTGLFGVNLGGI) traverse the membrane as a helical segment. Residues 295 to 300 (PGGGWR) lie on the Periplasmic side of the membrane. Residues 301-321 (FGFSLFCILLVVLIGGVTLWL) traverse the membrane as a helical segment. Topologically, residues 322–327 (HRSKWL) are cytoplasmic.

The protein belongs to the CorA metal ion transporter (MIT) (TC 1.A.35) family.

It localises to the cell inner membrane. It catalyses the reaction Zn(2+)(out) + H(+)(out) = Zn(2+)(in) + H(+)(in). Functionally, zinc transporter. Acts as a Zn(2+):proton symporter, which likely mediates zinc ion uptake. In Salmonella enteritidis PT4 (strain P125109), this protein is Zinc transport protein ZntB.